The sequence spans 101 residues: Cilia- and flagella-associated protein 141 (101 aa).

In terms of assembly, microtubule inner protein component of sperm flagellar doublet microtubules.

Its subcellular location is the cytoplasm. It is found in the cytoskeleton. The protein resides in the cilium axoneme. The protein localises to the flagellum axoneme. Microtubule inner protein (MIP) part of the dynein-decorated doublet microtubules (DMTs) in cilia axoneme, which is required for motile cilia beating. The chain is Cilia- and flagella-associated protein 141 from Mus musculus (Mouse).